The primary structure comprises 489 residues: Coronin-1B (489 aa).

S2 is modified (phosphoserine). WD repeat units follow at residues 80–120, 130–170, 174–213, 217–260, and 265–305; these read GHTG…LTSP, GHTK…ELYR, LHPDLIYNVSWNRNGSLFCSACKDKSVRIIDPRQGTLVAE, AHEG…EPMA, and DSSN…PYIH. Residues 414–443 form a disordered region; the sequence is DSRPAMAPGSSRLGAPASTTAAADATPSGS. Residues 427-443 show a composition bias toward low complexity; that stretch reads GAPASTTAAADATPSGS. Residues 449–474 are a coiled coil; the sequence is EAGKLEEVMQELRALRALVKEQGERI.

Belongs to the WD repeat coronin family. In terms of assembly, forms homooligomers, but does not form complexes with the other coronins. Interacts with Arp2/3 complex components, including ACTR2, ARPC1B and ARPC2. Binds actin. Phosphorylation on Ser-2 regulates the interaction with the Arp2/3 complex and cell motility in fibroblasts. Phosphorylation does not seem to affect subcellular location.

It is found in the cytoplasm. Its subcellular location is the cytoskeleton. It localises to the stress fiber. In terms of biological role, regulates leading edge dynamics and cell motility in fibroblasts. May be involved in cytokinesis and signal transduction. This is Coronin-1B (CORO1B) from Pongo abelii (Sumatran orangutan).